Here is a 90-residue protein sequence, read N- to C-terminus: Small ribosomal subunit protein bS16 (90 aa).

This sequence belongs to the bacterial ribosomal protein bS16 family.

The polypeptide is Small ribosomal subunit protein bS16 (Streptococcus sanguinis (strain SK36)).